Here is a 204-residue protein sequence, read N- to C-terminus: Putative 3-methyladenine DNA glycosylase (204 aa).

Belongs to the DNA glycosylase MPG family.

In Bacillus mycoides (strain KBAB4) (Bacillus weihenstephanensis), this protein is Putative 3-methyladenine DNA glycosylase.